A 350-amino-acid polypeptide reads, in one-letter code: Biotin synthase (350 aa).

One can recognise a Radical SAM core domain in the interval 41-268 (NEVQISRLLS…KSRVRLSAGR (228 aa)). [4Fe-4S] cluster contacts are provided by Cys-56, Cys-60, and Cys-63. The [2Fe-2S] cluster site is built by Cys-100, Cys-131, Cys-191, and Arg-263.

The protein belongs to the radical SAM superfamily. Biotin synthase family. In terms of assembly, homodimer. [4Fe-4S] cluster serves as cofactor. [2Fe-2S] cluster is required as a cofactor.

It carries out the reaction (4R,5S)-dethiobiotin + (sulfur carrier)-SH + 2 reduced [2Fe-2S]-[ferredoxin] + 2 S-adenosyl-L-methionine = (sulfur carrier)-H + biotin + 2 5'-deoxyadenosine + 2 L-methionine + 2 oxidized [2Fe-2S]-[ferredoxin]. The protein operates within cofactor biosynthesis; biotin biosynthesis; biotin from 7,8-diaminononanoate: step 2/2. Functionally, catalyzes the conversion of dethiobiotin (DTB) to biotin by the insertion of a sulfur atom into dethiobiotin via a radical-based mechanism. The polypeptide is Biotin synthase (Shewanella frigidimarina (strain NCIMB 400)).